The sequence spans 118 residues: Large ribosomal subunit protein bL19 (118 aa).

This sequence belongs to the bacterial ribosomal protein bL19 family.

This protein is located at the 30S-50S ribosomal subunit interface and may play a role in the structure and function of the aminoacyl-tRNA binding site. This Salinispora tropica (strain ATCC BAA-916 / DSM 44818 / JCM 13857 / NBRC 105044 / CNB-440) protein is Large ribosomal subunit protein bL19.